Reading from the N-terminus, the 21-residue chain is Large ribosomal subunit protein uL10 (21 aa).

This sequence belongs to the universal ribosomal protein uL10 family. In terms of assembly, part of the ribosomal stalk of the 50S ribosomal subunit. The N-terminus interacts with L11 and the large rRNA to form the base of the stalk. The C-terminus forms an elongated spine to which L12 dimers bind in a sequential fashion forming a multimeric L10(L12)X complex.

Functionally, forms part of the ribosomal stalk, playing a central role in the interaction of the ribosome with GTP-bound translation factors. The sequence is that of Large ribosomal subunit protein uL10 (rplJ) from Bacillus cereus.